The primary structure comprises 365 residues: tRNA-specific 2-thiouridylase MnmA (365 aa).

Residues 14-21 (AMSGGVDS) and Leu40 each bind ATP. Cys108 serves as the catalytic Nucleophile. A disulfide bond links Cys108 and Cys204. ATP is bound at residue Gly132. An interaction with tRNA region spans residues 154 to 156 (KDQ). Cys204 functions as the Cysteine persulfide intermediate in the catalytic mechanism.

This sequence belongs to the MnmA/TRMU family.

Its subcellular location is the cytoplasm. The enzyme catalyses S-sulfanyl-L-cysteinyl-[protein] + uridine(34) in tRNA + AH2 + ATP = 2-thiouridine(34) in tRNA + L-cysteinyl-[protein] + A + AMP + diphosphate + H(+). In terms of biological role, catalyzes the 2-thiolation of uridine at the wobble position (U34) of tRNA, leading to the formation of s(2)U34. The sequence is that of tRNA-specific 2-thiouridylase MnmA from Rickettsia africae (strain ESF-5).